The sequence spans 202 residues: Ras-related protein Rab-1A (202 aa).

GTP contacts are provided by residues glycine 15 to cysteine 23, tyrosine 33 to threonine 40, aspartate 63 to glutamine 67, asparagine 121 to aspartate 124, and serine 151 to lysine 153. Residues phenylalanine 37–phenylalanine 45 carry the Effector region motif. The segment at glutamine 180–cysteine 202 is disordered. S-geranylgeranyl cysteine attachment occurs at residues cysteine 201 and cysteine 202.

The protein belongs to the small GTPase superfamily. Rab family.

Its subcellular location is the cell membrane. This chain is Ras-related protein Rab-1A (rab1A), found in Dictyostelium discoideum (Social amoeba).